The chain runs to 279 residues: HTH-type transcriptional regulator HdfR (279 aa).

An HTH lysR-type domain is found at 1 to 58; that stretch reads MDTELLKTFLEVSRTRHFGRAAESLYLTQSAVSFRIRQLENQLGVNLFTRHRNNIRLT. The segment at residues 18-37 is a DNA-binding region (H-T-H motif); that stretch reads FGRAAESLYLTQSAVSFRIR.

This sequence belongs to the LysR transcriptional regulatory family.

In terms of biological role, negatively regulates the transcription of the flagellar master operon flhDC by binding to the upstream region of the operon. The protein is HTH-type transcriptional regulator HdfR of Escherichia fergusonii (strain ATCC 35469 / DSM 13698 / CCUG 18766 / IAM 14443 / JCM 21226 / LMG 7866 / NBRC 102419 / NCTC 12128 / CDC 0568-73).